Here is a 68-residue protein sequence, read N- to C-terminus: Amphipathic peptide OcyC1 (68 aa).

The first 23 residues, 1-23 (MKAQLCILLIALVLFQTFSQSDA), serve as a signal peptide directing secretion. Phenylalanine 36 is modified (phenylalanine amide). The propeptide occupies 38-68 (RRGLNDLDDLDELFDGEISQADVDFLNELMR).

This sequence belongs to the non-disulfide-bridged peptide (NDBP) superfamily. Short antimicrobial peptide (group 4) family. As to expression, expressed by the venom gland.

The protein localises to the secreted. The protein resides in the target cell membrane. Functionally, antimicrobial peptide. Inhibits the growth of Gram-positive and Gram-negative bacteria. Shows antifungal activity with MIC values ranging from 12.5 to 25 uM. Also shows an inhibitory activity on C.albicans biofilms at high concentrations. Shows low cytotoxic activity and has weak hemolytic activity. The protein is Amphipathic peptide OcyC1 of Opisthacanthus cayaporum (South American scorpion).